The sequence spans 503 residues: MILISLCFTTFLAFLFLNPLLKRTTTTKPNQPPSPWRLPVIGYLHQLSLHPHRSFRSLSLRLWSAHAPSLRSCPYPRFSKYISSSDVAHDVMKTHDLKFANRPKTKAVDIIINGGRDVAFSSYGEYWRQMKSLCTVHLLGRQMVRSFEKVREEEITSVIWKLEKQSSSSLPVNLSDLLLNMSNDVICRIAVGRKYSREENTSDFENQLRKVMELLGAFPVGDYIPGLAWIDKVRGLDRKMEEVSKTFVEFLERVVQEHVDEGENKETFDFVDILLIQLEKTNEFELERSDIRLIILEFFLGGTTTTFTAIDWAMTLVVRHPESMKKLQEEIQTYSRNKLYVPEEEVENMKYLKAVIKEVFRLHPPGPLSIPRQLSEDVKLKDMIIPAGTMIIVFINAWAIHRDTEKWGPYAEEFKPERHLDLPLNFQGQDFNFIPFGSGRRLCPDIDFATMLIEVGLANFVYRFNWRVETRPLGDDDGLKQTGMEVCHKFPLIAFPSLASFTI.

Residues 1–21 (MILISLCFTTFLAFLFLNPLL) traverse the membrane as a helical segment. Cys-443 serves as a coordination point for heme.

It belongs to the cytochrome P450 family. Heme is required as a cofactor.

It is found in the membrane. The chain is Putative cytochrome P450 71A28 (CYP71A28) from Arabidopsis thaliana (Mouse-ear cress).